Consider the following 355-residue polypeptide: Probable tRNA-dihydrouridine synthase 1 (355 aa).

Residues 48–50 (PLS) and Gln102 each bind FMN. The active-site Proton donor is the Cys132. FMN is bound by residues Lys171, 232 to 234 (NGD), and 256 to 257 (SR).

It belongs to the Dus family. FMN serves as cofactor.

It catalyses the reaction a 5,6-dihydrouridine in tRNA + NAD(+) = a uridine in tRNA + NADH + H(+). It carries out the reaction a 5,6-dihydrouridine in tRNA + NADP(+) = a uridine in tRNA + NADPH + H(+). Catalyzes the synthesis of 5,6-dihydrouridine (D), a modified base found in the D-loop of most tRNAs, via the reduction of the C5-C6 double bond in target uridines. The sequence is that of Probable tRNA-dihydrouridine synthase 1 (dus1) from Synechocystis sp. (strain ATCC 27184 / PCC 6803 / Kazusa).